The sequence spans 173 residues: MVDIALRSAVVAFMVVSLSAMFTSTQHSEVHIIGFSIPVSLRWNRSQPFEFLVVVELLICAYAFVQFVYQSVVLAKNAVPTRRCIWVQLAADQVCAYLVLAAAAAAAGASRTNKSGFQSLGMQNIKVPGVCIVLDKFCNRATIAIIFTLLAAGASGISVTLDVYMLTLTYYMG.

M1 is a topological domain (cytoplasmic). A helical transmembrane segment spans residues 2-22; the sequence is VDIALRSAVVAFMVVSLSAMF. At 23–48 the chain is on the extracellular side; that stretch reads TSTQHSEVHIIGFSIPVSLRWNRSQP. N-linked (GlcNAc...) asparagine glycosylation occurs at N44. A helical membrane pass occupies residues 49 to 69; it reads FEFLVVVELLICAYAFVQFVY. Topologically, residues 70-84 are cytoplasmic; sequence QSVVLAKNAVPTRRC. The helical transmembrane segment at 85-105 threads the bilayer; the sequence is IWVQLAADQVCAYLVLAAAAA. The Extracellular segment spans residues 106-140; the sequence is AAGASRTNKSGFQSLGMQNIKVPGVCIVLDKFCNR. A glycan (N-linked (GlcNAc...) asparagine) is linked at N113. A helical transmembrane segment spans residues 141–161; the sequence is ATIAIIFTLLAAGASGISVTL. The Cytoplasmic portion of the chain corresponds to 162 to 173; it reads DVYMLTLTYYMG.

It belongs to the Casparian strip membrane proteins (CASP) family. As to quaternary structure, homodimer and heterodimers.

Its subcellular location is the cell membrane. The sequence is that of CASP-like protein 3A1 from Pteridium aquilinum subsp. aquilinum (Bracken fern).